The following is a 30-amino-acid chain: Cycloviolin-D (30 aa).

The segment at residues 1-30 is a cross-link (cyclopeptide (Gly-Asn)); sequence GFPCGESCVFIPCISAAIGCSCKNKVCYRN. 3 disulfide bridges follow: Cys4–Cys20, Cys8–Cys22, and Cys13–Cys27.

This is a cyclic peptide.

Probably participates in a plant defense mechanism. Has anti-HIV activity. This Leonia cymosa (Sacha uba) protein is Cycloviolin-D.